We begin with the raw amino-acid sequence, 748 residues long: Far upstream element-binding protein 2 (748 aa).

The disordered stretch occupies residues 1 to 78 (MSDYNTGGPP…GIRKDAFADA (78 aa)). N-acetylserine is present on serine 2. A compositionally biased stretch (pro residues) spans 8–17 (GPPPGPPPPA). Composition is skewed to gly residues over residues 18 to 28 (GGGGGAAGAGG) and 36 to 69 (GAGD…GGPG). Position 40 is an omega-N-methylarginine (arginine 40). Residue lysine 88 is modified to N6-acetyllysine. The disordered stretch occupies residues 90–148 (GGDAATTVNNNTPDFGFGGQKRQLEDGDQPDSKKLASQGDSIGSQLGPIHPPPRTSMTE). Threonine 101 carries the phosphothreonine modification. The segment covering 111–123 (RQLEDGDQPDSKK) has biased composition (basic and acidic residues). Lysine 122 is covalently cross-linked (Glycyl lysine isopeptide (Lys-Gly) (interchain with G-Cter in SUMO1); alternate). A Glycyl lysine isopeptide (Lys-Gly) (interchain with G-Cter in SUMO2); alternate cross-link involves residue lysine 122. Residues serine 126, serine 130, serine 182, serine 185, serine 194, and serine 275 each carry the phosphoserine modification. KH domains follow at residues 145-209 (SMTE…KMML), 234-300 (GTVQ…CEMV), and 323-387 (GGGI…ARII). The tract at residues 394 to 422 (LRSGPPGPPGAPGMPPGGRGRGRGQGNWG) is disordered. Over residues 398–408 (PPGPPGAPGMP) the composition is skewed to pro residues. Residues 409-422 (PGGRGRGRGQGNWG) show a composition bias toward gly residues. An omega-N-methylarginine mark is found at arginine 412, arginine 414, arginine 416, and arginine 443. The KH 4 domain maps to 425–492 (GGEMTFSIPT…QQIDHAKQLI (68 aa)). Serine 481 is subject to Phosphoserine. The disordered stretch occupies residues 498–570 (GPLCPVGPGP…HDPNKAAAAA (73 aa)). Composition is skewed to pro residues over residues 502 to 521 (PVGP…PFNP) and 529 to 543 (PGAP…PHQY). Residues 572–583 (DPNAAWAAYYSH) form repeat 1. A 4 X 12 AA imperfect repeats region spans residues 572 to 685 (DPNAAWAAYY…SAAWAEYYRQ (114 aa)). Pro residues predominate over residues 588 to 614 (PPGPVPGPAPAPAAPPAQGEPPQPPPT). 3 disordered regions span residues 588-650 (PPGP…KAWE), 659-678 (VATG…YSAA), and 689-735 (YYGQ…PALV). Repeat copies occupy residues 618-629 (DYTKAWEEYYKK), 644-655 (DYTKAWEEYYKK), and 674-685 (DYSAAWAEYYRQ).

This sequence belongs to the KHSRP family. In terms of assembly, part of a ternary complex containing FUBP2, PTBP1, PTBP2 and HNRPH1. Interacts with PARN. Interacts with PQBP1.

It localises to the nucleus. Its subcellular location is the cytoplasm. Its function is as follows. Binds to the dendritic targeting element and may play a role in mRNA trafficking. Part of a ternary complex that binds to the downstream control sequence (DCS) of the pre-mRNA. Mediates exon inclusion in transcripts that are subject to tissue-specific alternative splicing. May interact with single-stranded DNA from the far-upstream element (FUSE). May activate gene expression. Also involved in degradation of inherently unstable mRNAs that contain AU-rich elements (AREs) in their 3'-UTR, possibly by recruiting degradation machinery to ARE-containing mRNAs. In Mus musculus (Mouse), this protein is Far upstream element-binding protein 2 (Khsrp).